Here is a 651-residue protein sequence, read N- to C-terminus: p-hydroxybenzoic acid efflux pump subunit AaeB (651 aa).

The next 11 membrane-spanning stretches (helical) occupy residues 11 to 31 (FAFK…HLQL), 41 to 61 (AAIV…SGAI), 67 to 87 (LRII…VLTI), 91 to 111 (VLTL…SSLV), 119 to 139 (FGLA…TPLL), 150 to 170 (EIVL…PRSI), 368 to 388 (LFWL…IAVV), 405 to 425 (FLVG…FIIP), 429 to 449 (QSML…GIEV), 455 to 475 (GSLG…PMIF), and 481 to 501 (LDSA…LLLI).

The protein belongs to the aromatic acid exporter ArAE (TC 2.A.85) family.

The protein resides in the cell inner membrane. In terms of biological role, forms an efflux pump with AaeA. Could function as a metabolic relief valve, allowing to eliminate certain compounds when they accumulate to high levels in the cell. The chain is p-hydroxybenzoic acid efflux pump subunit AaeB from Yersinia pseudotuberculosis serotype O:1b (strain IP 31758).